The primary structure comprises 130 residues: Cuticle protein 14 isoform a (130 aa).

In terms of domain architecture, Chitin-binding type R&amp;R spans Ile24–Asp90.

The chain is Cuticle protein 14 isoform a from Limulus polyphemus (Atlantic horseshoe crab).